A 353-amino-acid chain; its full sequence is Anthranilate phosphoribosyltransferase (353 aa).

Residues Gly86, 89–90 (GD), 96–99 (NVST), 114–122 (KHGNRAVSG), and Ser126 contribute to the 5-phospho-alpha-D-ribose 1-diphosphate site. Gly86 serves as a coordination point for anthranilate. Ser98 provides a ligand contact to Mg(2+). Residue Asn117 coordinates anthranilate. Position 172 (Arg172) interacts with anthranilate. Residues Asp231 and Glu232 each contribute to the Mg(2+) site.

The protein belongs to the anthranilate phosphoribosyltransferase family. In terms of assembly, homodimer. The cofactor is Mg(2+).

The enzyme catalyses N-(5-phospho-beta-D-ribosyl)anthranilate + diphosphate = 5-phospho-alpha-D-ribose 1-diphosphate + anthranilate. It functions in the pathway amino-acid biosynthesis; L-tryptophan biosynthesis; L-tryptophan from chorismate: step 2/5. Catalyzes the transfer of the phosphoribosyl group of 5-phosphorylribose-1-pyrophosphate (PRPP) to anthranilate to yield N-(5'-phosphoribosyl)-anthranilate (PRA). This is Anthranilate phosphoribosyltransferase from Pseudomonas syringae pv. syringae (strain B728a).